The primary structure comprises 261 residues: Calcium-binding protein 8 (261 aa).

The tract at residues 1–39 is disordered; the sequence is MRLPEQPGEGKPENEKKGDGGALGGGEEPPRSQAPDFPT. Residues 1–234 lie on the Cytoplasmic side of the membrane; it reads MRLPEQPGEG…QNRQTCVRKS (234 aa). The span at 8–19 shows a compositional bias: basic and acidic residues; the sequence is GEGKPENEKKGD. 2 EF-hand domains span residues 78-113 and 114-149; these read EELD…LGYM and PSEV…KLVS. Ca(2+) contacts are provided by Asp91, Asp93, Asn95, Glu102, Asp127, Asp129, Asp131, Gln133, and Glu138. The helical; Anchor for type IV membrane protein transmembrane segment at 235–255 threads the bilayer; that stretch reads LICAFAMAFIISVMLIAANQI. Residues 256–261 lie on the Extracellular side of the membrane; the sequence is LRSGME.

Interacts with PI4KB. This binding competes with FREQ/NCS1 binding in a calcium-dependent manner. As to expression, brain specific.

It is found in the golgi apparatus. The protein localises to the trans-Golgi network membrane. It localises to the cytoplasm. Its subcellular location is the perinuclear region. The protein resides in the cell membrane. Its function is as follows. Negatively regulates Golgi-to-plasma membrane trafficking by interacting with PI4KB and inhibiting its activity. May play a role in the physiology of neurons and is potentially important in memory and learning. This Homo sapiens (Human) protein is Calcium-binding protein 8 (CALN1).